A 309-amino-acid polypeptide reads, in one-letter code: 4-diphosphocytidyl-2-C-methyl-D-erythritol kinase (309 aa).

K28 is a catalytic residue. Residue 120 to 130 (PSQAGMGGGSS) coordinates ATP. Residue D162 is part of the active site.

It belongs to the GHMP kinase family. IspE subfamily.

The enzyme catalyses 4-CDP-2-C-methyl-D-erythritol + ATP = 4-CDP-2-C-methyl-D-erythritol 2-phosphate + ADP + H(+). Its pathway is isoprenoid biosynthesis; isopentenyl diphosphate biosynthesis via DXP pathway; isopentenyl diphosphate from 1-deoxy-D-xylulose 5-phosphate: step 3/6. Functionally, catalyzes the phosphorylation of the position 2 hydroxy group of 4-diphosphocytidyl-2C-methyl-D-erythritol. In Polaromonas sp. (strain JS666 / ATCC BAA-500), this protein is 4-diphosphocytidyl-2-C-methyl-D-erythritol kinase.